Consider the following 442-residue polypeptide: Trigger factor (442 aa).

The 86-residue stretch at Asn163–Asn248 folds into the PPIase FKBP-type domain.

The protein belongs to the FKBP-type PPIase family. Tig subfamily.

It is found in the cytoplasm. The enzyme catalyses [protein]-peptidylproline (omega=180) = [protein]-peptidylproline (omega=0). In terms of biological role, involved in protein export. Acts as a chaperone by maintaining the newly synthesized protein in an open conformation. Functions as a peptidyl-prolyl cis-trans isomerase. The polypeptide is Trigger factor (Buchnera aphidicola subsp. Schizaphis graminum (strain Sg)).